We begin with the raw amino-acid sequence, 215 residues long: uncharacterized protein (215 aa).

A run of 6 helical transmembrane segments spans residues Ile21–Asn40, Leu50–Phe69, Phe95–Phe117, Leu122–Leu144, Ala156–Leu178, and Leu183–Ser205.

Belongs to the CcmB/CycW/HelB family.

It localises to the cell membrane. This is an uncharacterized protein from Rickettsia conorii (strain ATCC VR-613 / Malish 7).